A 168-amino-acid chain; its full sequence is Ubiquitin-fold modifier-conjugating enzyme 1 (168 aa).

Cys-116 functions as the Glycyl thioester intermediate in the catalytic mechanism.

It belongs to the ubiquitin-conjugating enzyme family. UFC1 subfamily.

Functionally, E2-like enzyme which forms an intermediate with UFM1 via a thioester linkage. The sequence is that of Ubiquitin-fold modifier-conjugating enzyme 1 from Trichoplax adhaerens (Trichoplax reptans).